The primary structure comprises 309 residues: WD repeat domain phosphoinositide-interacting protein 4 (309 aa).

A WD 1 repeat occupies 4–42 (QPLRGVTSLHFNQDQSCFCCAMETGVRIYNVEPLMEKGH). Residues 180-183 (LRRG) carry the L/FRRG motif motif. Residues 184-223 (TDPATLYCINFSHDSSFLCASSDKGTVHIFALKDTRLNRR) form a WD 2 repeat.

The protein belongs to the WD repeat PROPPIN family. As to quaternary structure, interacts with WIPI1. Interacts with WIPI2. Interacts with ATG2A and ATG2B. Interacts with ULK1. May interact with the PRKAA1, PRKAA2, PRKAB1 and PRKAG1 subunits of the AMPK kinase. May interact with NUDC.

The protein localises to the preautophagosomal structure. The protein resides in the cytoplasm. Functionally, component of the autophagy machinery that controls the major intracellular degradation process by which cytoplasmic materials are packaged into autophagosomes and delivered to lysosomes for degradation. Binds phosphatidylinositol 3-phosphate (PtdIns3P). Activated by the STK11/AMPK signaling pathway upon starvation, WDR45 is involved in autophagosome assembly downstream of WIPI2, regulating the size of forming autophagosomes. Together with WIPI1, promotes ATG2 (ATG2A or ATG2B)-mediated lipid transfer by enhancing ATG2-association with phosphatidylinositol 3-monophosphate (PI3P)-containing membranes. Probably recruited to membranes through its PtdIns3P activity. The chain is WD repeat domain phosphoinositide-interacting protein 4 (Wdr45) from Rattus norvegicus (Rat).